The chain runs to 38 residues: Photosystem II reaction center protein L (38 aa).

A helical transmembrane segment spans residues 17–37 (SLYFGLLLIFVLAVLFSSYIF).

The protein belongs to the PsbL family. As to quaternary structure, PSII is composed of 1 copy each of membrane proteins PsbA, PsbB, PsbC, PsbD, PsbE, PsbF, PsbH, PsbI, PsbJ, PsbK, PsbL, PsbM, PsbT, PsbX, PsbY, PsbZ, Psb30/Ycf12, at least 3 peripheral proteins of the oxygen-evolving complex and a large number of cofactors. It forms dimeric complexes.

The protein localises to the plastid. It localises to the chloroplast thylakoid membrane. Its function is as follows. One of the components of the core complex of photosystem II (PSII). PSII is a light-driven water:plastoquinone oxidoreductase that uses light energy to abstract electrons from H(2)O, generating O(2) and a proton gradient subsequently used for ATP formation. It consists of a core antenna complex that captures photons, and an electron transfer chain that converts photonic excitation into a charge separation. This subunit is found at the monomer-monomer interface and is required for correct PSII assembly and/or dimerization. This is Photosystem II reaction center protein L from Chlamydomonas moewusii (Chlamydomonas eugametos).